Consider the following 415-residue polypeptide: Multifunctional CCA protein (415 aa).

ATP contacts are provided by glycine 8 and arginine 11. The CTP site is built by glycine 8 and arginine 11. 2 residues coordinate Mg(2+): glutamate 21 and aspartate 23. ATP is bound by residues arginine 91, arginine 137, and arginine 140. Residues arginine 91, arginine 137, and arginine 140 each contribute to the CTP site. The HD domain maps to 226–327 (TGIHTLMTVS…IKLFSAIDVW (102 aa)).

It belongs to the tRNA nucleotidyltransferase/poly(A) polymerase family. Bacterial CCA-adding enzyme type 1 subfamily. In terms of assembly, monomer. Can also form homodimers and oligomers. Mg(2+) is required as a cofactor. Ni(2+) serves as cofactor.

It carries out the reaction a tRNA precursor + 2 CTP + ATP = a tRNA with a 3' CCA end + 3 diphosphate. The enzyme catalyses a tRNA with a 3' CCA end + 2 CTP + ATP = a tRNA with a 3' CCACCA end + 3 diphosphate. Functionally, catalyzes the addition and repair of the essential 3'-terminal CCA sequence in tRNAs without using a nucleic acid template. Adds these three nucleotides in the order of C, C, and A to the tRNA nucleotide-73, using CTP and ATP as substrates and producing inorganic pyrophosphate. tRNA 3'-terminal CCA addition is required both for tRNA processing and repair. Also involved in tRNA surveillance by mediating tandem CCA addition to generate a CCACCA at the 3' terminus of unstable tRNAs. While stable tRNAs receive only 3'-terminal CCA, unstable tRNAs are marked with CCACCA and rapidly degraded. In Sodalis glossinidius (strain morsitans), this protein is Multifunctional CCA protein.